Reading from the N-terminus, the 336-residue chain is Cytoskeleton protein RodZ (336 aa).

The Cytoplasmic segment spans residues 1–111 (MNTEATHDQN…LGKRRKKRDG (111 aa)). The HTH cro/C1-type domain maps to 19–71 (LRNAREQLGLSQQAVAERLCLKVSTVRDIEEDKAPADLASTFLRGYIRSYARL). Positions 30 to 49 (QQAVAERLCLKVSTVRDIEE) form a DNA-binding region, H-T-H motif. Residues 112–132 (WLMTFTWLVLFVVIGLSGAWW) form a helical; Signal-anchor for type II membrane protein membrane-spanning segment. The Periplasmic segment spans residues 133–336 (WQDHKAQQEE…TLNAEQSPAQ (204 aa)). Over residues 148-164 (DQSSAELNNNQSQSVPL) the composition is skewed to polar residues. The tract at residues 148 to 245 (DQSSAELNNN…PLPTDQAGVT (98 aa)) is disordered. Residues 165–201 (DTSTTTDQAMATTPTSPVDTTATNTQTPAATTAPSPT) show a composition bias toward low complexity. The span at 202–217 (VDSQQNAVVPPSQANV) shows a compositional bias: polar residues. The span at 218–240 (DTAATPAPAATTTPDGAAPLPTD) shows a compositional bias: low complexity.

The protein belongs to the RodZ family.

The protein localises to the cell inner membrane. Its function is as follows. Cytoskeletal protein that is involved in cell-shape control through regulation of the length of the long axis. The polypeptide is Cytoskeleton protein RodZ (Escherichia coli O7:K1 (strain IAI39 / ExPEC)).